The primary structure comprises 207 residues: Large ribosomal subunit protein uL4 (207 aa).

The disordered stretch occupies residues 44-78 (LRQGTHKTKTRSEVRGGGRKPWRQKGTGRARQGSI). A compositionally biased stretch (basic residues) spans 60 to 71 (GGRKPWRQKGTG).

It belongs to the universal ribosomal protein uL4 family. In terms of assembly, part of the 50S ribosomal subunit.

Its function is as follows. One of the primary rRNA binding proteins, this protein initially binds near the 5'-end of the 23S rRNA. It is important during the early stages of 50S assembly. It makes multiple contacts with different domains of the 23S rRNA in the assembled 50S subunit and ribosome. Forms part of the polypeptide exit tunnel. This is Large ribosomal subunit protein uL4 from Halalkalibacterium halodurans (strain ATCC BAA-125 / DSM 18197 / FERM 7344 / JCM 9153 / C-125) (Bacillus halodurans).